The primary structure comprises 248 residues: 3-deoxy-manno-octulosonate cytidylyltransferase (248 aa).

It belongs to the KdsB family.

It is found in the cytoplasm. It catalyses the reaction 3-deoxy-alpha-D-manno-oct-2-ulosonate + CTP = CMP-3-deoxy-beta-D-manno-octulosonate + diphosphate. Its pathway is nucleotide-sugar biosynthesis; CMP-3-deoxy-D-manno-octulosonate biosynthesis; CMP-3-deoxy-D-manno-octulosonate from 3-deoxy-D-manno-octulosonate and CTP: step 1/1. It functions in the pathway bacterial outer membrane biogenesis; lipopolysaccharide biosynthesis. Functionally, activates KDO (a required 8-carbon sugar) for incorporation into bacterial lipopolysaccharide in Gram-negative bacteria. This Shigella dysenteriae serotype 1 (strain Sd197) protein is 3-deoxy-manno-octulosonate cytidylyltransferase.